Consider the following 2197-residue polypeptide: Protein Ycf2 (2197 aa).

1539–1546 (GSIGTGRS) is an ATP binding site.

Belongs to the Ycf2 family.

It localises to the plastid. The protein localises to the chloroplast stroma. Probable ATPase of unknown function. Its presence in a non-photosynthetic plant (Epifagus virginiana) and experiments in tobacco indicate that it has an essential function which is probably not related to photosynthesis. The sequence is that of Protein Ycf2 from Ipomoea purpurea (Common morning glory).